Consider the following 208-residue polypeptide: Uracil phosphoribosyltransferase (208 aa).

5-phospho-alpha-D-ribose 1-diphosphate contacts are provided by residues arginine 78, arginine 103, and 130 to 138; that span reads DPMLATANS. Uracil-binding positions include isoleucine 193 and 198 to 200; that span reads GDA. Residue aspartate 199 participates in 5-phospho-alpha-D-ribose 1-diphosphate binding.

Belongs to the UPRTase family. Requires Mg(2+) as cofactor.

It carries out the reaction UMP + diphosphate = 5-phospho-alpha-D-ribose 1-diphosphate + uracil. Its pathway is pyrimidine metabolism; UMP biosynthesis via salvage pathway; UMP from uracil: step 1/1. With respect to regulation, allosterically activated by GTP. Functionally, catalyzes the conversion of uracil and 5-phospho-alpha-D-ribose 1-diphosphate (PRPP) to UMP and diphosphate. The sequence is that of Uracil phosphoribosyltransferase from Brucella ovis (strain ATCC 25840 / 63/290 / NCTC 10512).